A 285-amino-acid chain; its full sequence is Bifunctional protein FolD (285 aa).

NADP(+)-binding positions include 166–168 (GAS) and I232.

Belongs to the tetrahydrofolate dehydrogenase/cyclohydrolase family. Homodimer.

The enzyme catalyses (6R)-5,10-methylene-5,6,7,8-tetrahydrofolate + NADP(+) = (6R)-5,10-methenyltetrahydrofolate + NADPH. It catalyses the reaction (6R)-5,10-methenyltetrahydrofolate + H2O = (6R)-10-formyltetrahydrofolate + H(+). It functions in the pathway one-carbon metabolism; tetrahydrofolate interconversion. Functionally, catalyzes the oxidation of 5,10-methylenetetrahydrofolate to 5,10-methenyltetrahydrofolate and then the hydrolysis of 5,10-methenyltetrahydrofolate to 10-formyltetrahydrofolate. This Aliivibrio salmonicida (strain LFI1238) (Vibrio salmonicida (strain LFI1238)) protein is Bifunctional protein FolD.